The primary structure comprises 378 residues: UDP-N-acetylglucosamine--N-acetylmuramyl-(pentapeptide) pyrophosphoryl-undecaprenol N-acetylglucosamine transferase (378 aa).

Residues 14 to 16 (TGG), N125, R165, S193, and Q293 each bind UDP-N-acetyl-alpha-D-glucosamine.

It belongs to the glycosyltransferase 28 family. MurG subfamily.

The protein resides in the cell inner membrane. It carries out the reaction di-trans,octa-cis-undecaprenyl diphospho-N-acetyl-alpha-D-muramoyl-L-alanyl-D-glutamyl-meso-2,6-diaminopimeloyl-D-alanyl-D-alanine + UDP-N-acetyl-alpha-D-glucosamine = di-trans,octa-cis-undecaprenyl diphospho-[N-acetyl-alpha-D-glucosaminyl-(1-&gt;4)]-N-acetyl-alpha-D-muramoyl-L-alanyl-D-glutamyl-meso-2,6-diaminopimeloyl-D-alanyl-D-alanine + UDP + H(+). The protein operates within cell wall biogenesis; peptidoglycan biosynthesis. Cell wall formation. Catalyzes the transfer of a GlcNAc subunit on undecaprenyl-pyrophosphoryl-MurNAc-pentapeptide (lipid intermediate I) to form undecaprenyl-pyrophosphoryl-MurNAc-(pentapeptide)GlcNAc (lipid intermediate II). In Bartonella henselae (strain ATCC 49882 / DSM 28221 / CCUG 30454 / Houston 1) (Rochalimaea henselae), this protein is UDP-N-acetylglucosamine--N-acetylmuramyl-(pentapeptide) pyrophosphoryl-undecaprenol N-acetylglucosamine transferase.